The chain runs to 671 residues: MKKKANEEKAQKRAKTEAKAEATQENKTKENNKAKESKIKESKIKEAKAKEPIPVKKLSFNEALEELFANSLSDCVSYESIIQISAKVPTLAQIKKIKELCQKYQKKLVSSSEYAKKLNAIDKIKKTEEKQKVLDEELEDGYDFLKEKDFLEWSRSDSPVRMYLREMGDIKLLSKDEEIELSKQIRLGEDIILDAICSVPYLIDFIYAYKDALINRERRVKELFRSFDDDDENSVSDSKKDEDNEEDEENEERKKVVSEKDKKRVEKVQESFKALDKAKKEWLKALEAPIDEREDELVRSLTLAYKRQTLKDRLYDLEPTSKLINELVKTMETTLKSGDGFEKELKRLEYKLPLFNDTLIANHKKILANITNMTKEDIIAQVPEATMVSVYMDLKKLFLTKEASEEGFDLAPNKLKEILEQIKRGKLISDRAKNKMAKSNLRLVVSIAKRFTSRGLPFLDLIQEGNIGLMKAVDKFEHEKGFKFSTYATWWIKQAISRAIADQARTIRIPIHMIDTINRINKVMRKHIQENGKEPDLEVVAEEVGLSLDKVKNVIKVTKEPISLETPVGNDDDGKFGDFVEDKNIVSSIDHIMREDLKAQIESVLDQLNEREKAVIRMRFGLLDDESDRTLEEIGKELNVTRERVRQIESSAIKKLRSPQYGRILRNYLRI.

2 disordered regions span residues 1–45 and 229–260; these read MKKK…SKIK and DDDE…VSEK. The span at 251 to 260 shows a compositional bias: basic and acidic residues; that stretch reads EERKKVVSEK. The tract at residues 436-506 is sigma-70 factor domain-2; it reads MAKSNLRLVV…SRAIADQART (71 aa). The Interaction with polymerase core subunit RpoC signature appears at 460-463; it reads DLIQ. The sigma-70 factor domain-3 stretch occupies residues 515-591; sequence DTINRINKVM…DKNIVSSIDH (77 aa). Residues 604 to 658 form a sigma-70 factor domain-4 region; the sequence is VLDQLNEREKAVIRMRFGLLDDESDRTLEEIGKELNVTRERVRQIESSAIKKLRS. Positions 631–650 form a DNA-binding region, H-T-H motif; the sequence is LEEIGKELNVTRERVRQIES.

It belongs to the sigma-70 factor family. RpoD/SigA subfamily. As to quaternary structure, interacts transiently with the RNA polymerase catalytic core.

It is found in the cytoplasm. In terms of biological role, sigma factors are initiation factors that promote the attachment of RNA polymerase to specific initiation sites and are then released. This sigma factor is the primary sigma factor during exponential growth. The chain is RNA polymerase sigma factor RpoD from Helicobacter pylori (strain ATCC 700392 / 26695) (Campylobacter pylori).